Consider the following 394-residue polypeptide: 1-deoxy-D-xylulose 5-phosphate reductoisomerase (394 aa).

Residues Thr-12, Gly-13, Ser-14, Ile-15, Gly-38, Asn-41, and Asn-132 each coordinate NADPH. Lys-133 is a 1-deoxy-D-xylulose 5-phosphate binding site. Glu-134 contacts NADPH. Asp-156 is a Mn(2+) binding site. Residues Ser-157, Glu-158, Ser-182, and His-205 each coordinate 1-deoxy-D-xylulose 5-phosphate. Glu-158 contacts Mn(2+). Gly-211 provides a ligand contact to NADPH. The 1-deoxy-D-xylulose 5-phosphate site is built by Ser-218, Asn-223, Lys-224, and Glu-227. Position 227 (Glu-227) interacts with Mn(2+).

It belongs to the DXR family. Mg(2+) serves as cofactor. It depends on Mn(2+) as a cofactor.

It carries out the reaction 2-C-methyl-D-erythritol 4-phosphate + NADP(+) = 1-deoxy-D-xylulose 5-phosphate + NADPH + H(+). It participates in isoprenoid biosynthesis; isopentenyl diphosphate biosynthesis via DXP pathway; isopentenyl diphosphate from 1-deoxy-D-xylulose 5-phosphate: step 1/6. In terms of biological role, catalyzes the NADPH-dependent rearrangement and reduction of 1-deoxy-D-xylulose-5-phosphate (DXP) to 2-C-methyl-D-erythritol 4-phosphate (MEP). The sequence is that of 1-deoxy-D-xylulose 5-phosphate reductoisomerase from Pseudarthrobacter chlorophenolicus (strain ATCC 700700 / DSM 12829 / CIP 107037 / JCM 12360 / KCTC 9906 / NCIMB 13794 / A6) (Arthrobacter chlorophenolicus).